Reading from the N-terminus, the 156-residue chain is uncharacterized protein (156 aa).

5 helical membrane-spanning segments follow: residues 7-29, 42-64, 69-88, 98-120, and 133-155; these read AQISVVLSTIIIMTYAFLSSYFL, YFALSNLLSLSLPFVCAWFPYLF, AVTGSALSAFGLFLFFAITS, AAIWVIYFFWLIGAALAGVYPAL, and ALVLSALFTVVVSFIIGFLISRI.

It localises to the cell membrane. This is an uncharacterized protein from Pasteurella multocida (strain Pm70).